The chain runs to 525 residues: MSQEQYTENLKVIVAEKLAGIPNFNEDIKYVAEYIVLLIVNGGTVESVVDELASLFDSVSRDTLANVVQTAFFALEALQQGESAENIVSKIRMMNAQSLGQSDIAQQQQQQQQQQQPDIAQQQPQQQPQQQPQQQPQQQPQQQPQQQPQQQPQQQPQLQPLQPQLGTQNAMQTDAPATPSPISAFSGVVNAAAPPQFAPVDNSQRFTQRGGGAVGKNRRGGRGGNRGGRNNNSTRFNPLAKALGMAGESNMNFTPTKKEGRCRLFPHCPLGRSCPHAHPTKVCNEYPNCPKPPGTCEFLHPNEDEELMKEMERTREEFQKRKADLLAAKRKPVQTGIVLCKFGALCSNPSCPFGHPTPANEDAKVIDLMWCDKNLTCDNPECRKAHSSLSKIKEVKPISQKKAAPPPVEKSLEQCKFGTHCTNKRCKYRHARSHIMCREGANCTRIDCLFGHPINEDCRFGVNCKNIYCLFRHPPGRVLPEKKGAAPNSNVPTNERPFALPENAIIENAPPQTSFTHQEQDTEMN.

Disordered regions lie at residues 102-160 (SDIA…QLQP) and 196-236 (QFAP…STRF). Low complexity predominate over residues 103–160 (DIAQQQQQQQQQQQPDIAQQQPQQQPQQQPQQQPQQQPQQQPQQQPQQQPQQQPQLQP). Repeat copies occupy residues 121-124 (QQQP), 125-128 (QQQP), 129-132 (QQQP), 133-136 (QQQP), 137-140 (QQQP), 141-144 (QQQP), 145-148 (QQQP), 149-152 (QQQP), and 153-156 (QQQP). A 10 X 4 AA tandem repeats of Q-Q-Q-P region spans residues 121 to 156 (QQQPQQQPQQQPQQQPQQQPQQQPQQQPQQQPQQQP). The stretch at 157–160 (QLQP) is one 10; approximate repeat. 2 positions are modified to omega-N-methylarginine: arginine 209 and arginine 222. The tract at residues 209–228 (RGGGAVGKNRRGGRGGNRGG) is RNA-binding RGG-box. Positions 209-239 (RGGGAVGKNRRGGRGGNRGGRNNNSTRFNPL) are PY-NLS nuclear localization signal. Threonine 254 is modified (phosphothreonine). 7 C3H1-type zinc fingers span residues 262–278 (CRLF…PHAH), 283–300 (CNEY…EFLH), 340–355 (CKFG…PFGH), 371–386 (CDKN…RKAH), 415–430 (CKFG…KYRH), 437–452 (CREG…LFGH), and 458–473 (CRFG…LFRH). The disordered stretch occupies residues 503–525 (NAIIENAPPQTSFTHQEQDTEMN). The segment covering 510–525 (PPQTSFTHQEQDTEMN) has biased composition (polar residues).

This sequence belongs to the ZC3H14 family. As to quaternary structure, interacts with MLP1. Interacts with PUB1. Methylated by HMT1.

Its subcellular location is the nucleus. It localises to the cytoplasm. Functionally, RNA-binding protein involved in RNA processing and transcription regulation. Acts as a regulator of mRNA stability: binds the poly(A) tail of mRNAs and pre-mRNAs, preventing their degradation by the exosome. Involved in the biogenesis of circular RNAs (circRNAs) which are produced by back-splicing circularization of pre-mRNAs. Involved in mRNA poly(A) tail length control and nuclear export. Functions in surveillance and the packaging leading to generation of export-competent mRNPs. Controls both mRNP compaction that facilitates movement through nuclear pore complexes and the length of transcript poly(A) tails. Also acts as a regulator of transcription. Associates directly with nascent RNA polymerase II transcripts and remains associated during subsequent nuclear RNA processing reactions. Required for RNA polymerase III (RNAPIII) transcription: required for the occupancy of RNAPIII and Transcription factor IIIB (TFIIIB) at target genes, possibly via direct association with nascent RNAPIII transcripts. The protein is Nuclear polyadenylated RNA-binding protein NAB2 of Saccharomyces cerevisiae (strain ATCC 204508 / S288c) (Baker's yeast).